A 408-amino-acid chain; its full sequence is Protein ZNF365 (408 aa).

Serine 16 is modified (phosphoserine). The segment at 26 to 51 (FRCPRCGDHTRFRSLSSLRAHLEFSH) adopts a C2H2-type; degenerate zinc-finger fold. A phosphoserine mark is found at serine 139 and serine 146. Residues 170–298 (VEAVDRTIEK…QLEYYQSQQA (129 aa)) are a coiled coil. Threonine 176 carries the post-translational modification Phosphothreonine. At serine 370 the chain carries Phosphoserine.

In terms of assembly, homodimers. Interacts with NDE1 and NDEL1. Interacts with DISC1. Interacts with PARP1. Interacts with MCRS1. In terms of tissue distribution, expressed in cerebral cortex, hippocampus, olfactory tubercle and striatum.

The protein localises to the cytoplasm. It localises to the cytoskeleton. The protein resides in the microtubule organizing center. It is found in the centrosome. Involved in the positive regulation of oligodendrocyte differentiation during postnatal growth. Involved in the morphogenesis of basket cells in the somatosensory cortex during embryogenesis. Involved in dendritic arborization, morphogenesis of spine density dendrite, and establishment of postsynaptic dendrite density in cortical pyramidal neurons. Involved in the regulation of neurogenesis. Negatively regulates neurite outgrowth. Involved in homologous recombination (HR) repair pathway. Required for proper resolution of DNA double-strand breaks (DSBs) by HR. Is required for recovery of stalled replication forks, and directly contributes to genomic stability. Interacts with PARP1 and mediates MRE11-dependent DNA end resection during replication fork recovery. Contributes to genomic stability by preventing telomere dysfunction. The chain is Protein ZNF365 (Znf365) from Rattus norvegicus (Rat).